We begin with the raw amino-acid sequence, 111 residues long: Large ribosomal subunit protein uL22 (111 aa).

Belongs to the universal ribosomal protein uL22 family. As to quaternary structure, part of the 50S ribosomal subunit.

Functionally, this protein binds specifically to 23S rRNA; its binding is stimulated by other ribosomal proteins, e.g. L4, L17, and L20. It is important during the early stages of 50S assembly. It makes multiple contacts with different domains of the 23S rRNA in the assembled 50S subunit and ribosome. Its function is as follows. The globular domain of the protein is located near the polypeptide exit tunnel on the outside of the subunit, while an extended beta-hairpin is found that lines the wall of the exit tunnel in the center of the 70S ribosome. This chain is Large ribosomal subunit protein uL22, found in Citrifermentans bemidjiense (strain ATCC BAA-1014 / DSM 16622 / JCM 12645 / Bem) (Geobacter bemidjiensis).